The following is a 269-amino-acid chain: Protein-L-isoaspartate O-methyltransferase (269 aa).

The tract at residues 1 to 53 (MSAGQRPAPKFPLRLDQVKPAGRSGAAPLLRPQRPLHQAATERGRGTTPAGLG) is disordered. Residue Ser-113 is part of the active site.

It belongs to the methyltransferase superfamily. L-isoaspartyl/D-aspartyl protein methyltransferase family.

It localises to the cytoplasm. It catalyses the reaction [protein]-L-isoaspartate + S-adenosyl-L-methionine = [protein]-L-isoaspartate alpha-methyl ester + S-adenosyl-L-homocysteine. In terms of biological role, catalyzes the methyl esterification of L-isoaspartyl residues in peptides and proteins that result from spontaneous decomposition of normal L-aspartyl and L-asparaginyl residues. It plays a role in the repair and/or degradation of damaged proteins. The chain is Protein-L-isoaspartate O-methyltransferase from Methylibium petroleiphilum (strain ATCC BAA-1232 / LMG 22953 / PM1).